We begin with the raw amino-acid sequence, 438 residues long: Exosome complex component RRP45B (438 aa).

2 disordered regions span residues 293-322 (PTLA…RAAE) and 334-438 (STEE…KNKS). Composition is skewed to basic and acidic residues over residues 307-322 (VKEE…RAAE) and 334-347 (STEE…EEAA). Residues 380-394 (TKSSSTKKMNGSGNA) show a composition bias toward polar residues. The segment covering 410 to 429 (LGKKDTKHKDGEMTLKDAVK) has biased composition (basic and acidic residues).

It belongs to the RNase PH family.

It is found in the cytoplasm. It localises to the nucleus. In terms of biological role, probable 3'-&gt;5' exoribonuclease involved in the regulation of cuticular wax biosynthesis by controlling the expression of CER3. May act by degrading a specific mRNA species encoding a negative regulator of CER3 transcription. Can perform exosomal functions and complement the yeast rrp45 null mutant. This is Exosome complex component RRP45B from Arabidopsis thaliana (Mouse-ear cress).